Here is a 117-residue protein sequence, read N- to C-terminus: Transcription elongation factor SPT4 (117 aa).

Positions 1-40 (MSLETVPKDLRHLRACLLCSLVKTIDQFEYDGCDNCESYL) are interaction with SUPT5H. A C4-type zinc finger spans residues 16 to 36 (CLLCSLVKTIDQFEYDGCDNC).

It belongs to the SPT4 family. In terms of assembly, interacts with SUPT5H to form the DSIF complex. DSIF interacts with RNA polymerase II and with the positive transcription elongation factor b complex (P-TEFb complex), which is composed of CDK9 and cyclin-T.

Its subcellular location is the nucleus. Its function is as follows. May function as a component of the DRB sensitivity-inducing factor complex (DSIF complex), which regulates transcription elongation by RNA polymerase II. Probably enhances transcriptional pausing at sites proximal to the promoter, which may facilitate the assembly of an elongation competent RNA polymerase II complex. Also acts to stimulate transcriptional elongation at low nucleotide concentrations. Regulation of transcriptional elongation by this protein is required for the expression of genes which control neuronal development. In Danio rerio (Zebrafish), this protein is Transcription elongation factor SPT4 (supt4h1).